Consider the following 885-residue polypeptide: Protein PTHB1 (885 aa).

The seven-bladed beta-propeller stretch occupies residues 1-406 (MSLFKARDWW…LQGVWPLTEQ (406 aa)). The interval 684 to 764 (RDKTPAPLQH…FLPLQEDTQE (81 aa)) is interaction with LZTL1.

Part of BBSome complex, that contains BBS1, BBS2, BBS4, BBS5, BBS7, BBS8/TTC8, BBS9 and BBIP10. Interacts with LZTL1; the interaction mediates the association of LZTL1 with the BBsome complex and regulates BBSome ciliary trafficking.

The protein resides in the cell projection. It localises to the cilium membrane. The protein localises to the cytoplasm. It is found in the cytoskeleton. Its subcellular location is the microtubule organizing center. The protein resides in the centrosome. It localises to the centriolar satellite. The BBSome complex is thought to function as a coat complex required for sorting of specific membrane proteins to the primary cilia. The BBSome complex is required for ciliogenesis but is dispensable for centriolar satellite function. This ciliogenic function is mediated in part by the Rab8 GDP/GTP exchange factor, which localizes to the basal body and contacts the BBSome. Rab8(GTP) enters the primary cilium and promotes extension of the ciliary membrane. Firstly the BBSome associates with the ciliary membrane and binds to RAB3IP/Rabin8, the guanosyl exchange factor (GEF) for Rab8 and then the Rab8-GTP localizes to the cilium and promotes docking and fusion of carrier vesicles to the base of the ciliary membrane. Required for proper BBSome complex assembly and its ciliary localization. This is Protein PTHB1 (Bbs9) from Mus musculus (Mouse).